A 309-amino-acid polypeptide reads, in one-letter code: Ribosomal RNA large subunit methyltransferase F (309 aa).

Belongs to the methyltransferase superfamily. METTL16/RlmF family.

It localises to the cytoplasm. The enzyme catalyses adenosine(1618) in 23S rRNA + S-adenosyl-L-methionine = N(6)-methyladenosine(1618) in 23S rRNA + S-adenosyl-L-homocysteine + H(+). Its function is as follows. Specifically methylates the adenine in position 1618 of 23S rRNA. This chain is Ribosomal RNA large subunit methyltransferase F, found in Cronobacter sakazakii (strain ATCC BAA-894) (Enterobacter sakazakii).